Here is a 998-residue protein sequence, read N- to C-terminus: Antigenic heat-stable 120 kDa protein (998 aa).

Positions 1 to 69 (GGFMSQDHTG…LSGTISTDDQ (69 aa)) are disordered. A compositionally biased stretch (acidic residues) spans 12 to 21 (ENDEGYESDI). The segment covering 46–68 (TPASSTQSTPAISTLSGTISTDD) has biased composition (polar residues).

It localises to the cytoplasm. This Rickettsia akari protein is Antigenic heat-stable 120 kDa protein (sca4).